The primary structure comprises 1755 residues: MESQQLSQHSHISHGSACASVTSKEVHTNQDPLDVSASKTEECEKASTKANSQQTTTPASSAVPENPHHASPQPASVPPPQNGPYPQQCMMTQNQANPSGWSFYGHPSMIPYTPYQMSPMYFPPGPQSQFPQYPSSVGTPLSTPSPESGNTFTDSSSADSDMTSTKKYVRPPPMLTSPNDFPNWVKTYIKFLQNSNLGGIIPTVNGKPVRQITDDELTFLYNTFQIFAPSQFLPTWVKDILSVDYTDIMKILSKSIEKMQSDTQEANDIVTLANLQYNGSTPADAFETKVTNIIDRLNNNGIHINNKVACQLIMRGLSGEYKFLRYTRHRHLNMTVAELFLDIHAIYEEQQGSRNSKPNYRRNLSDEKNDSRSYTNTTKPKVIARNPQKTNNSKSKTARAHNVSTSNNSPSTDNDSISKSTTEPIQLNNKHDLHLGQELTESTVNHTNHSDDELPGHLLLDSGASRTLIRSAHHIHSASSNPDINVVDAQKRNIPINAIGDLQFHFQDNTKTSIKVLHTPNIAYDLLSLNELAAVDITACFTKNVLERSDGTVLAPIVQYGDFYWVSKRYLLPSNISVPTINNVHTSESTRKYPYPFIHRMLAHANAQTIRYSLKNNTITYFNESDVDWSSAIDYQCPDCLIGKSTKHRHIKGSRLKYQNSYEPFQYLHTDIFGPVHNLPKSAPSYFISFTDETTKFRWVYPLHDRREDSILDVFTTILAFIKNQFQASVLVIQMDRGSEYTNRTLHKFLEKNGITPCYTTTADSRAHGVAERLNRTLLDDCRTQLQCSGLPNHLWFSAIEFSTIVRNSLASPKSKKSASQHAGLAGLDISTLLPFGQPVIVNDHNPNSKIHPRGIPGYALHPSRNSYGYIIYLPSLKKTVDTTNYVILQGKESRLDQFNYDALTFDEDLNRLTASYHSFIASNEIQESNDLNIESDHDFQSDIELHPEQPRNVLSKAVSPTDSTPPSTHTEDSKPISEINLRAPREVDPNISESNILPSKKRSSTPQISNIESTGSGGMHKLNVPLLAPMSQSNTHESSHASKSKDFRHSDSYSNNETNHTNVPISSTGGTNNKTVPQISDQETEKRIIHRSPSIDASPPENNSSHNIVPIKTPTTVSEQNTEESIIADLPLPDPPPEPPTELSDSFKELPPINSRQTNSSLGGIGDSNAYTTINSKKRSLEDNETEIKVSRDTWNTKNMRSLEPPRSKKRIHLIAAAKAVKSIKPIRTTLRYDEAITYNKDIKEKEKYIEAYHKEVNQLLKMNTWDTDKYYDRKEIDPKRVINSMFIFNKKRDGTHKARFVARGDIQHPDTYDTGMQSNTVHHYALMTSLSLALDNNYYITQLDISSAYLYADIKEELYIRPPPHLGMNDKLIRLKKSHYGLKQSGANWYETIKSYLIKQCGMEEVRGWSCVFKNSQVTICLFVDDMILFSKDLNANKKIITTLKKQYDTKIINLGESDNEIQYDILGLEIKYQRGKYMKLGMENSLTEKIPKLNVPLNPKGRKLSAPGQPGLYIDQDELEIDEDEYKEKVHEMQKLIGLASYVGYKFRFDLLYYINTLAQHILFPSRQVLDMTYELIQFMWDTRDKQLIWHKNKPTEPDNKLVAISDASYGNQPYYKSQIGNIFLLNGKVIGGKSTKASLTCTSTTEAEIHAVSEAIPLLNNLSHLVQELNKKPIIKGLLTDSRSTISIIKSTNEEKFRNRFFGTKAMRLRDEVSGNNLYVYYIETKKNIADVMTKPLPIKTFKLLTNKWIH.

The span at 1-16 (MESQQLSQHSHISHGS) shows a compositional bias: low complexity. 3 disordered regions span residues 1–93 (MESQ…MMTQ), 126–173 (PQSQ…RPPP), and 352–421 (GSRN…SKST). 2 stretches are compositionally biased toward polar residues: residues 48–60 (TKAN…TPAS) and 127–152 (QSQF…GNTF). Positions 153-165 (TDSSSADSDMTST) are enriched in low complexity. Residues 299–401 (NNGIHINNKV…NSKSKTARAH (103 aa)) form an RNA-binding region. Residues 402-418 (NVSTSNNSPSTDNDSIS) show a composition bias toward low complexity. Position 416 is a phosphoserine (S416). Catalysis depends on D461, which acts as the For protease activity; shared with dimeric partner. Residues 583–640 (NVHTSESTRKYPYPFIHRMLAHANAQTIRYSLKNNTITYFNESDVDWSSAIDYQCPDC) form an integrase-type zinc finger-like region. Residues 660–829 (NSYEPFQYLH…SQHAGLAGLD (170 aa)) enclose the Integrase catalytic domain. Mg(2+) contacts are provided by D671 and D736. 3 disordered regions span residues 956 to 1087 (SKAV…ETEK), 1092 to 1111 (RSPS…NIVP), and 1129 to 1172 (ADLP…SNAY). Over residues 960–969 (SPTDSTPPST) the composition is skewed to low complexity. The span at 1005-1015 (STPQISNIEST) shows a compositional bias: polar residues. The segment covering 1038–1052 (ESSHASKSKDFRHSD) has biased composition (basic and acidic residues). 2 stretches are compositionally biased toward polar residues: residues 1053–1082 (SYSN…QISD) and 1101–1111 (PENNSSHNIVP). Positions 1178 to 1212 (KKRSLEDNETEIKVSRDTWNTKNMRSLEPPRSKKR) match the Bipartite nuclear localization signal motif. The 139-residue stretch at 1338-1476 (NNYYITQLDI…DILGLEIKYQ (139 aa)) folds into the Reverse transcriptase Ty1/copia-type domain. D1346, D1427, D1428, D1610, E1652, and D1685 together coordinate Mg(2+). The RNase H Ty1/copia-type domain occupies 1610-1752 (DASYGNQPYY…IKTFKLLTNK (143 aa)).

The capsid protein forms a homotrimer, from which the VLPs are assembled. The protease is a homodimer, whose active site consists of two apposed aspartic acid residues. In terms of processing, initially, virus-like particles (VLPs) are composed of the structural unprocessed proteins Gag and Gag-Pol, and also contain the host initiator methionine tRNA (tRNA(i)-Met) which serves as a primer for minus-strand DNA synthesis, and a dimer of genomic Ty RNA. Processing of the polyproteins occurs within the particle and proceeds by an ordered pathway, called maturation. First, the protease (PR) is released by autocatalytic cleavage of the Gag-Pol polyprotein yielding capsid protein p45 and a Pol-p154 precursor protein. This cleavage is a prerequisite for subsequent processing of Pol-p154 at the remaining sites to release the mature structural and catalytic proteins. Maturation takes place prior to the RT reaction and is required to produce transposition-competent VLPs.

The protein localises to the cytoplasm. Its subcellular location is the nucleus. The catalysed reaction is DNA(n) + a 2'-deoxyribonucleoside 5'-triphosphate = DNA(n+1) + diphosphate. It carries out the reaction Endonucleolytic cleavage to 5'-phosphomonoester.. In terms of biological role, capsid protein (CA) is the structural component of the virus-like particle (VLP), forming the shell that encapsulates the retrotransposons dimeric RNA genome. The particles are assembled from trimer-clustered units and there are holes in the capsid shells that allow for the diffusion of macromolecules. CA also has nucleocapsid-like chaperone activity, promoting primer tRNA(i)-Met annealing to the multipartite primer-binding site (PBS), dimerization of Ty1 RNA and initiation of reverse transcription. The aspartyl protease (PR) mediates the proteolytic cleavages of the Gag and Gag-Pol polyproteins after assembly of the VLP. Functionally, reverse transcriptase/ribonuclease H (RT) is a multifunctional enzyme that catalyzes the conversion of the retro-elements RNA genome into dsDNA within the VLP. The enzyme displays a DNA polymerase activity that can copy either DNA or RNA templates, and a ribonuclease H (RNase H) activity that cleaves the RNA strand of RNA-DNA heteroduplexes during plus-strand synthesis and hydrolyzes RNA primers. The conversion leads to a linear dsDNA copy of the retrotransposon that includes long terminal repeats (LTRs) at both ends. Its function is as follows. Integrase (IN) targets the VLP to the nucleus, where a subparticle preintegration complex (PIC) containing at least integrase and the newly synthesized dsDNA copy of the retrotransposon must transit the nuclear membrane. Once in the nucleus, integrase performs the integration of the dsDNA into the host genome. This Saccharomyces cerevisiae (strain ATCC 204508 / S288c) (Baker's yeast) protein is Transposon Ty1-LR3 Gag-Pol polyprotein (TY1B-LR3).